The sequence spans 308 residues: Hydroxyacylglutathione hydrolase, mitochondrial (308 aa).

Residues 1-13 (MVLGRGLLGRRSL) constitute a mitochondrion transit peptide. 4 residues coordinate Zn(2+): histidine 102, histidine 104, aspartate 106, and histidine 107. Lysine 116 bears the N6-acetyllysine mark. The Zn(2+) site is built by histidine 158 and aspartate 182. Residues 191 to 193 (KFY) and 221 to 223 (HEY) contribute to the substrate site. Histidine 221 provides a ligand contact to Zn(2+). N6-acetyllysine; alternate is present on lysine 229. At lysine 229 the chain carries N6-succinyllysine; alternate. A substrate-binding site is contributed by 297–300 (RKEK).

The protein belongs to the metallo-beta-lactamase superfamily. Glyoxalase II family. As to quaternary structure, monomer. The cofactor is Zn(2+). As to expression, testis.

The protein resides in the mitochondrion matrix. The protein localises to the cytoplasm. The catalysed reaction is an S-(2-hydroxyacyl)glutathione + H2O = a 2-hydroxy carboxylate + glutathione + H(+). It catalyses the reaction (R)-S-lactoylglutathione + H2O = (R)-lactate + glutathione + H(+). It participates in secondary metabolite metabolism; methylglyoxal degradation; (R)-lactate from methylglyoxal: step 2/2. Thiolesterase that catalyzes the hydrolysis of S-D-lactoyl-glutathione to form glutathione and D-lactic acid. The chain is Hydroxyacylglutathione hydrolase, mitochondrial (HAGH) from Macaca fascicularis (Crab-eating macaque).